The primary structure comprises 149 residues: 6,7-dimethyl-8-ribityllumazine synthase (149 aa).

5-amino-6-(D-ribitylamino)uracil-binding positions include Phe-22, 56–58, and 80–82; these read ALE and AVI. 85 to 86 serves as a coordination point for (2S)-2-hydroxy-3-oxobutyl phosphate; that stretch reads ET. His-88 acts as the Proton donor in catalysis. A 5-amino-6-(D-ribitylamino)uracil-binding site is contributed by Asn-113. (2S)-2-hydroxy-3-oxobutyl phosphate is bound at residue Arg-127.

Belongs to the DMRL synthase family.

The enzyme catalyses (2S)-2-hydroxy-3-oxobutyl phosphate + 5-amino-6-(D-ribitylamino)uracil = 6,7-dimethyl-8-(1-D-ribityl)lumazine + phosphate + 2 H2O + H(+). It participates in cofactor biosynthesis; riboflavin biosynthesis; riboflavin from 2-hydroxy-3-oxobutyl phosphate and 5-amino-6-(D-ribitylamino)uracil: step 1/2. Functionally, catalyzes the formation of 6,7-dimethyl-8-ribityllumazine by condensation of 5-amino-6-(D-ribitylamino)uracil with 3,4-dihydroxy-2-butanone 4-phosphate. This is the penultimate step in the biosynthesis of riboflavin. The chain is 6,7-dimethyl-8-ribityllumazine synthase from Methylobacillus flagellatus (strain ATCC 51484 / DSM 6875 / VKM B-1610 / KT).